We begin with the raw amino-acid sequence, 726 residues long: Probable dipeptidyl-peptidase 5 (726 aa).

Positions 1-19 (MAAAKWLIASLAFASSGLA) are cleaved as a signal peptide. N-linked (GlcNAc...) asparagine glycosylation is found at asparagine 96 and asparagine 252. A disordered region spans residues 269-291 (AEPINKRNGPRTPQGIEGASSSP). Residue asparagine 485 is glycosylated (N-linked (GlcNAc...) asparagine). The active-site Charge relay system is the serine 558. Residue asparagine 605 is glycosylated (N-linked (GlcNAc...) asparagine). Active-site charge relay system residues include aspartate 641 and histidine 673. N-linked (GlcNAc...) asparagine glycosylation is present at asparagine 699.

Belongs to the peptidase S9C family.

The protein resides in the secreted. Its function is as follows. Extracellular dipeptidyl-peptidase which removes N-terminal dipeptides sequentially from polypeptides having unsubstituted N-termini. Contributes to pathogenicity. The polypeptide is Probable dipeptidyl-peptidase 5 (DPP5) (Arthroderma benhamiae (strain ATCC MYA-4681 / CBS 112371) (Trichophyton mentagrophytes)).